A 222-amino-acid chain; its full sequence is Twisted gastrulation protein homolog 1 (222 aa).

An N-terminal signal peptide occupies residues 1–24 (MKSHYIVLALASLTFLLCLPVSQS). Residues Asn80 and Asn146 are each glycosylated (N-linked (GlcNAc...) asparagine).

Belongs to the twisted gastrulation protein family. Interacts with CHRD and/or BMP4. This interaction enhances CHRD/BMP4 complex formation. Interacts with BMP7. As to expression, expressed in lymph node, liver, kidney, and lung. Expression in the kidney was stronger in the medulla than in the cortex, particularly in the cells surrounding the medullary tubules. Expressed in growth plate cartilage of long bones, ribs, and digits and to a lesser extent also in the resting zone of the epiphysis, trabecular bone, and vertebral cartilage. Expression seems to be absent from other skeletal tissues including muscle, skin, and fibroblasts.

The protein localises to the secreted. Functionally, may be involved in dorsoventral axis formation. Seems to antagonize BMP signaling by forming ternary complexes with CHRD and BMPs, thereby preventing BMPs from binding to their receptors. In addition to the anti-BMP function, also has pro-BMP activity, partly mediated by cleavage and degradation of CHRD, which releases BMPs from ternary complexes. May be an important modulator of BMP-regulated cartilage development and chondrocyte differentiation. May play a role in thymocyte development. The polypeptide is Twisted gastrulation protein homolog 1 (Twsg1) (Mus musculus (Mouse)).